A 257-amino-acid polypeptide reads, in one-letter code: 1-(5-phosphoribosyl)-5-[(5-phosphoribosylamino)methylideneamino] imidazole-4-carboxamide isomerase (257 aa).

Aspartate 8 functions as the Proton acceptor in the catalytic mechanism. Aspartate 129 acts as the Proton donor in catalysis.

Belongs to the HisA/HisF family.

Its subcellular location is the cytoplasm. It carries out the reaction 1-(5-phospho-beta-D-ribosyl)-5-[(5-phospho-beta-D-ribosylamino)methylideneamino]imidazole-4-carboxamide = 5-[(5-phospho-1-deoxy-D-ribulos-1-ylimino)methylamino]-1-(5-phospho-beta-D-ribosyl)imidazole-4-carboxamide. Its pathway is amino-acid biosynthesis; L-histidine biosynthesis; L-histidine from 5-phospho-alpha-D-ribose 1-diphosphate: step 4/9. The polypeptide is 1-(5-phosphoribosyl)-5-[(5-phosphoribosylamino)methylideneamino] imidazole-4-carboxamide isomerase (Gloeothece citriformis (strain PCC 7424) (Cyanothece sp. (strain PCC 7424))).